Here is an 827-residue protein sequence, read N- to C-terminus: Periplasmic nitrate reductase (827 aa).

Residues 1–34 (MSLTRRDFIKANAVAATAAAAGIATPAIAQPAKA) constitute a signal peptide (tat-type signal). One can recognise a 4Fe-4S Mo/W bis-MGD-type domain in the interval 36–92 (IRWDKGVCRFCGTGCAVLVGVQDGRVVATQGDPDSPVNRGLNCIKGYFLSKIMYGED). [4Fe-4S] cluster is bound by residues C43, C46, C50, and C78. Residues K80, Q148, N173, C177, 210 to 217 (WGSNMAEM), 241 to 245 (STFEH), 260 to 262 (QTD), M371, Q375, N481, 507 to 508 (SD), K530, D557, and 717 to 726 (TGRVLEHWHS) contribute to the Mo-bis(molybdopterin guanine dinucleotide) site. Residue F793 participates in substrate binding. Mo-bis(molybdopterin guanine dinucleotide)-binding residues include N801 and K818.

The protein belongs to the prokaryotic molybdopterin-containing oxidoreductase family. NasA/NapA/NarB subfamily. In terms of assembly, component of the periplasmic nitrate reductase NapAB complex composed of NapA and NapB. [4Fe-4S] cluster is required as a cofactor. The cofactor is Mo-bis(molybdopterin guanine dinucleotide). Predicted to be exported by the Tat system. The position of the signal peptide cleavage has not been experimentally proven.

The protein localises to the periplasm. It catalyses the reaction 2 Fe(II)-[cytochrome] + nitrate + 2 H(+) = 2 Fe(III)-[cytochrome] + nitrite + H2O. In terms of biological role, catalytic subunit of the periplasmic nitrate reductase complex NapAB. Receives electrons from NapB and catalyzes the reduction of nitrate to nitrite. In Paramagnetospirillum magneticum (strain ATCC 700264 / AMB-1) (Magnetospirillum magneticum), this protein is Periplasmic nitrate reductase.